The primary structure comprises 577 residues: Arginine--tRNA ligase (577 aa).

Residues 122–132 (PNVAKEMHVGH) carry the 'HIGH' region motif.

It belongs to the class-I aminoacyl-tRNA synthetase family. As to quaternary structure, monomer.

The protein localises to the cytoplasm. It carries out the reaction tRNA(Arg) + L-arginine + ATP = L-arginyl-tRNA(Arg) + AMP + diphosphate. In Vibrio parahaemolyticus serotype O3:K6 (strain RIMD 2210633), this protein is Arginine--tRNA ligase.